The following is a 163-amino-acid chain: Ribosome maturation factor RimM (163 aa).

In terms of domain architecture, PRC barrel spans 92-162 (EDEFYVADLV…AGRAVVRPPE (71 aa)).

Belongs to the RimM family. Binds ribosomal protein uS19.

Its subcellular location is the cytoplasm. Its function is as follows. An accessory protein needed during the final step in the assembly of 30S ribosomal subunit, possibly for assembly of the head region. Essential for efficient processing of 16S rRNA. May be needed both before and after RbfA during the maturation of 16S rRNA. It has affinity for free ribosomal 30S subunits but not for 70S ribosomes. This Rubrobacter xylanophilus (strain DSM 9941 / JCM 11954 / NBRC 16129 / PRD-1) protein is Ribosome maturation factor RimM.